Consider the following 185-residue polypeptide: Histone H1-delta (185 aa).

Disordered stretches follow at residues 1-37 (MADT…PKYS) and 90-185 (RHVK…GKKK). The H15 domain occupies 32-105 (SHPKYSDMIA…GASGSFLLAE (74 aa)). Basic residues predominate over residues 109–185 (TPKKAAAKKA…KAAKGKGKKK (77 aa)).

It belongs to the histone H1/H5 family.

The protein resides in the nucleus. It localises to the chromosome. Functionally, histones H1 are necessary for the condensation of nucleosome chains into higher-order structures. The sequence is that of Histone H1-delta from Strongylocentrotus purpuratus (Purple sea urchin).